A 102-amino-acid chain; its full sequence is MDMNRIVLRLYITGNSVRSQQAIANIYRICQEDLGDQYNVEIIDVLEQPQRAEEEKIMVTPTLIKQLPPPLQRIIGDMSNTEKVLLGLDIVPEGLQVRLPED.

The protein belongs to the KaiB family. As to quaternary structure, purifies as a monomer and homotetramer. Interacts with KaiC1 and KaiC3.

A paralog of KaiB1, the major clock oscillator protein in this species. KaiB3 and KaiC3 may cross talk with the core oscillator. The monomer reduces the ATPase activity of KaiC3 by 55%, the homotetramer has no effect. Its function is as follows. A metamorphic protein which may reversibly switch between an inactive tetrameric fold and a rare thioredoxin-like monomeric fold (KaiB(fs)). The protein is Circadian clock protein KaiB3 of Synechocystis sp. (strain ATCC 27184 / PCC 6803 / Kazusa).